Reading from the N-terminus, the 513-residue chain is MSQQRDLIVVVDFGGQYSHLIARRVREAQVYCEIWPFTAPVQRYREAGVKGIIFSGGPASVEQADAPRIDPAIYELGIPILGICYGMQLMALQLGGEVRRGQQGEYGRATLRLADAEHPLLRGLGRESLVWMSHFDSVTRVPSGFRVLGATENTAVAVMGDDARRLYGVQFHPEVVHTAQGREILRNFLFNIAGCRGDWTTESFITRQVEEIRRQVGSGRVLCALSGGVDSSVAAVLVHKAVGDQLTCIFVDHGLMRKGEPEQVVRTFRDHFHIHLVHVDASERFLSKLRGVTDPEQKRKIIGNEFIRLFEDEARKLGQIDFLVQGTVYPDVIESGTETARVIKSHHNVGGLPEDMRFQLIEPFRQLFKDEVRAVGRALGVPEEIVGRHPFPGPGLGVRVLGEVTPEKLEILREADRIFVEEIRKAGLYDELWQAFTVLPDVRSVGVMGDERTYAYPVVLRAVTSEDAMTADFYRLPWDLLERIASRIVNEVPHVNRVVYDVTSKPPGTIEWE.

In terms of domain architecture, Glutamine amidotransferase type-1 spans 7 to 198 (LIVVVDFGGQ…LFNIAGCRGD (192 aa)). Residue C84 is the Nucleophile of the active site. Catalysis depends on residues H172 and E174. Residues 199–388 (WTTESFITRQ…LGVPEEIVGR (190 aa)) form the GMPS ATP-PPase domain. 226-232 (SGGVDSS) serves as a coordination point for ATP.

In terms of assembly, homodimer.

It carries out the reaction XMP + L-glutamine + ATP + H2O = GMP + L-glutamate + AMP + diphosphate + 2 H(+). The protein operates within purine metabolism; GMP biosynthesis; GMP from XMP (L-Gln route): step 1/1. In terms of biological role, catalyzes the synthesis of GMP from XMP. This Symbiobacterium thermophilum (strain DSM 24528 / JCM 14929 / IAM 14863 / T) protein is GMP synthase [glutamine-hydrolyzing].